We begin with the raw amino-acid sequence, 241 residues long: 1-(5-phosphoribosyl)-5-[(5-phosphoribosylamino)methylideneamino] imidazole-4-carboxamide isomerase (241 aa).

D8 (proton acceptor) is an active-site residue. The Proton donor role is filled by D129.

It belongs to the HisA/HisF family.

The protein resides in the cytoplasm. The catalysed reaction is 1-(5-phospho-beta-D-ribosyl)-5-[(5-phospho-beta-D-ribosylamino)methylideneamino]imidazole-4-carboxamide = 5-[(5-phospho-1-deoxy-D-ribulos-1-ylimino)methylamino]-1-(5-phospho-beta-D-ribosyl)imidazole-4-carboxamide. It functions in the pathway amino-acid biosynthesis; L-histidine biosynthesis; L-histidine from 5-phospho-alpha-D-ribose 1-diphosphate: step 4/9. This Rhodospirillum rubrum (strain ATCC 11170 / ATH 1.1.1 / DSM 467 / LMG 4362 / NCIMB 8255 / S1) protein is 1-(5-phosphoribosyl)-5-[(5-phosphoribosylamino)methylideneamino] imidazole-4-carboxamide isomerase.